Here is a 434-residue protein sequence, read N- to C-terminus: Protein translocase subunit SecY (434 aa).

The next 10 membrane-spanning stretches (helical) occupy residues 19–39 (LFTL…IPGI), 73–93 (IFML…LLVY), 117–137 (YLTI…AKGI), 148–168 (YIFV…WFGE), 179–199 (TSLI…FNLF), 209–229 (VNPV…ILII), 264–284 (VLPV…LSGF), 300–320 (PNGF…TYFY), 362–382 (FSGS…QNIF), and 391–411 (IMGG…LIHI).

It belongs to the SecY/SEC61-alpha family. As to quaternary structure, component of the Sec protein translocase complex. Heterotrimer consisting of SecY, SecE and SecG subunits. The heterotrimers can form oligomers, although 1 heterotrimer is thought to be able to translocate proteins. Interacts with the ribosome. Interacts with SecDF, and other proteins may be involved. Interacts with SecA.

The protein resides in the cell inner membrane. Its function is as follows. The central subunit of the protein translocation channel SecYEG. Consists of two halves formed by TMs 1-5 and 6-10. These two domains form a lateral gate at the front which open onto the bilayer between TMs 2 and 7, and are clamped together by SecE at the back. The channel is closed by both a pore ring composed of hydrophobic SecY resides and a short helix (helix 2A) on the extracellular side of the membrane which forms a plug. The plug probably moves laterally to allow the channel to open. The ring and the pore may move independently. The protein is Protein translocase subunit SecY of Borreliella burgdorferi (strain ATCC 35210 / DSM 4680 / CIP 102532 / B31) (Borrelia burgdorferi).